A 182-amino-acid polypeptide reads, in one-letter code: Small ribosomal subunit protein uS5 (182 aa).

The region spanning 16 to 79 is the S5 DRBM domain; it reads FVDRLVHINR…ESAKRGMIYV (64 aa).

It belongs to the universal ribosomal protein uS5 family. Part of the 30S ribosomal subunit. Contacts proteins S4 and S8.

In terms of biological role, with S4 and S12 plays an important role in translational accuracy. Its function is as follows. Located at the back of the 30S subunit body where it stabilizes the conformation of the head with respect to the body. This is Small ribosomal subunit protein uS5 from Bartonella henselae (strain ATCC 49882 / DSM 28221 / CCUG 30454 / Houston 1) (Rochalimaea henselae).